The sequence spans 252 residues: Ribose-5-phosphate isomerase (252 aa).

It belongs to the ribose 5-phosphate isomerase family.

It localises to the cytoplasm. It catalyses the reaction aldehydo-D-ribose 5-phosphate = D-ribulose 5-phosphate. It functions in the pathway carbohydrate degradation; pentose phosphate pathway; D-ribose 5-phosphate from D-ribulose 5-phosphate (non-oxidative stage): step 1/1. The protein is Ribose-5-phosphate isomerase (RKI1) of Debaryomyces hansenii (strain ATCC 36239 / CBS 767 / BCRC 21394 / JCM 1990 / NBRC 0083 / IGC 2968) (Yeast).